A 359-amino-acid polypeptide reads, in one-letter code: Glycerol-1-phosphate dehydrogenase [NAD(P)+] (359 aa).

NAD(+) is bound by residues 107-111 and 129-132; these read GRVID and TAAS. Asp134 contacts substrate. An NAD(+)-binding site is contributed by Ser138. Position 181 (Asp181) interacts with substrate. Positions 181 and 261 each coordinate Zn(2+). His265 contacts substrate. A Zn(2+)-binding site is contributed by His277.

It belongs to the glycerol-1-phosphate dehydrogenase family. The cofactor is Zn(2+).

The protein localises to the cytoplasm. It catalyses the reaction sn-glycerol 1-phosphate + NAD(+) = dihydroxyacetone phosphate + NADH + H(+). The enzyme catalyses sn-glycerol 1-phosphate + NADP(+) = dihydroxyacetone phosphate + NADPH + H(+). It participates in membrane lipid metabolism; glycerophospholipid metabolism. Functionally, catalyzes the NAD(P)H-dependent reduction of dihydroxyacetonephosphate (DHAP or glycerone phosphate) to glycerol 1-phosphate (G1P). The G1P thus generated is used as the glycerophosphate backbone of phospholipids in the cellular membranes of Archaea. This is Glycerol-1-phosphate dehydrogenase [NAD(P)+] from Methanospirillum hungatei JF-1 (strain ATCC 27890 / DSM 864 / NBRC 100397 / JF-1).